The following is a 621-amino-acid chain: SH2B adapter protein 2 (621 aa).

The residue at position 47 (Tyr-47) is a Phosphotyrosine. Ser-130 carries the phosphoserine modification. Residues 144-165 (RASPEPEGGATPKTTEPVSEPR) form a disordered region. One can recognise a PH domain in the interval 186–299 (DIQREGALRF…WVADIQGCVD (114 aa)). At Ser-303 the chain carries Phosphoserine. The SH2 domain maps to 409–507 (WFHGTLSRVK…SADITLRSYV (99 aa)). Disordered stretches follow at residues 507 to 528 (VRAQGPPPDPGPAPNTAAPVPA) and 548 to 609 (PPTS…ATLG). Residues 552-570 (PSNGAGASSSSGSSSSATS) show a composition bias toward low complexity. Phosphoserine is present on Ser-597. Tyr-618 carries the phosphotyrosine modification.

It belongs to the SH2B adapter family. In terms of assembly, homodimer. Interacts with KIT/c-KIT, SHC1, EPOR, PDGFR, VAV1 and VAV3. Interacts (via N-terminal region) with SHC1. Interacts (via the phosphorylated C-terminus) with GRB2. Interacts (via its SH2 domain) with EPOR, INSR and KIT. Interacts with GRB2 after B-cell antigen receptor stimulation. Interacts (via PH domain) with VAV3. Interacts with NTRK1, NTRK2 and NTRK3 (phosphorylated); after stimulation of the receptor by its extracellular ligand and subsequent autophosphorylation of the receptor. Binds INSR, GRB2, ASB6 and CAP. Insulin stimulation leads to dissociation of CAP. Binds CBS only when SH2B2/APS has become phosphorylated. INSR binding does not depend on the phosphorylation of SH2B2/APS. In terms of processing, phosphorylated on a tyrosine residue by NTRK1, NTRK2, NTRK3 and INSR after stimulation of the receptor by its extracellular ligand. Tyrosine phosphorylated by JAK2, KIT and other kinases activated by B-cell receptor in response to stimulation with cytokines, IL3, IL5, PDGF, IGF1, IGF2, CSF2/GM-CSF and cross-linking of the B-cell receptor complex. As to expression, detected in embryonic brain, spinal cord and cortical neurons.

The protein localises to the cytoplasm. Its subcellular location is the membrane. Functionally, adapter protein for several members of the tyrosine kinase receptor family. Involved in multiple signaling pathways. Binds to EPOR and suppresses EPO-induced STAT5 activation, possibly through a masking effect on STAT5 docking sites in EPOR. Suppresses PDGF-induced mitogenesis. Involved in stimulation of glucose uptake by insulin. Involved in coupling from immunoreceptor to Ras signaling. Acts as a negative regulator of cytokine signaling in collaboration with CBL. Induces cytoskeletal reorganization and neurite outgrowth in cultured neurons. The polypeptide is SH2B adapter protein 2 (Sh2b2) (Rattus norvegicus (Rat)).